Consider the following 759-residue polypeptide: NADP-dependent malic enzyme (759 aa).

The segment at 1 to 428 (MDDQLKQSAL…KLTEFVYKTN (428 aa)) is malic enzyme. Catalysis depends on Y39, which acts as the Proton donor. K56 is subject to N6-acetyllysine. The active-site Proton acceptor is K94. Residues E136, D137, and D162 each coordinate a divalent metal cation. NADP(+) is bound by residues 195–198 (AGAA), N288, and N320. The segment at 429 to 759 (LFMKPIFSQA…AVVEAQTQPL (331 aa)) is phosphate acetyltransferase; required for oligomerization, inhibition by acetyl-CoA and activation by glutamate, aspartate, and glucose-6-phosphate.

This sequence in the N-terminal section; belongs to the malic enzymes family. In the C-terminal section; belongs to the phosphate acetyltransferase and butyryltransferase family. As to quaternary structure, homooligomer, possibly an octamer. Mg(2+) serves as cofactor. It depends on Mn(2+) as a cofactor.

It catalyses the reaction (S)-malate + NADP(+) = pyruvate + CO2 + NADPH. It carries out the reaction oxaloacetate + H(+) = pyruvate + CO2. Inhibited by 4 mM Mg(2+) and acetyl-CoA, competitively inhibited by fumarate and oxaloacetate. Activated by glutamate and aspartate, glucose-6-phosphate, acetyl-phosphate and 2 mM KCl. Functionally, catalyzes the decarboxylation of malate to pyruvate. In vitro, shows malolactic enzyme activity in the presence of NADPH. However, it is unlikely that this activity is of relevance in E.coli, which produces little NADPH. In Escherichia coli (strain K12), this protein is NADP-dependent malic enzyme (maeB).